We begin with the raw amino-acid sequence, 577 residues long: Arginine--tRNA ligase (577 aa).

The 'HIGH' region motif lies at 122-132 (PNVAKEMHVGH).

Belongs to the class-I aminoacyl-tRNA synthetase family. As to quaternary structure, monomer.

It is found in the cytoplasm. It carries out the reaction tRNA(Arg) + L-arginine + ATP = L-arginyl-tRNA(Arg) + AMP + diphosphate. This Vibrio vulnificus (strain YJ016) protein is Arginine--tRNA ligase.